The following is a 176-amino-acid chain: Ribosome maturation factor RimM (176 aa).

Residues 95–169 (EDEVYLFELE…TARIAPPPGL (75 aa)) enclose the PRC barrel domain.

Belongs to the RimM family. In terms of assembly, binds ribosomal protein uS19.

The protein resides in the cytoplasm. In terms of biological role, an accessory protein needed during the final step in the assembly of 30S ribosomal subunit, possibly for assembly of the head region. Essential for efficient processing of 16S rRNA. May be needed both before and after RbfA during the maturation of 16S rRNA. It has affinity for free ribosomal 30S subunits but not for 70S ribosomes. The polypeptide is Ribosome maturation factor RimM (Nitratidesulfovibrio vulgaris (strain ATCC 29579 / DSM 644 / CCUG 34227 / NCIMB 8303 / VKM B-1760 / Hildenborough) (Desulfovibrio vulgaris)).